The chain runs to 125 residues: Large ribosomal subunit protein bL12 (125 aa).

It belongs to the bacterial ribosomal protein bL12 family. In terms of assembly, homodimer. Part of the ribosomal stalk of the 50S ribosomal subunit. Forms a multimeric L10(L12)X complex, where L10 forms an elongated spine to which 2 to 4 L12 dimers bind in a sequential fashion. Binds GTP-bound translation factors.

Its function is as follows. Forms part of the ribosomal stalk which helps the ribosome interact with GTP-bound translation factors. Is thus essential for accurate translation. In Thioalkalivibrio sulfidiphilus (strain HL-EbGR7), this protein is Large ribosomal subunit protein bL12.